The sequence spans 233 residues: 5'-methylthioadenosine/S-adenosylhomocysteine nucleosidase (233 aa).

Glu-12 functions as the Proton acceptor in the catalytic mechanism. Substrate-binding positions include Gly-78, Ile-152, and Met-173–Glu-174. The active-site Proton donor is Asp-197.

The protein belongs to the PNP/UDP phosphorylase family. MtnN subfamily. As to quaternary structure, homodimer.

It carries out the reaction S-adenosyl-L-homocysteine + H2O = S-(5-deoxy-D-ribos-5-yl)-L-homocysteine + adenine. It catalyses the reaction S-methyl-5'-thioadenosine + H2O = 5-(methylsulfanyl)-D-ribose + adenine. The enzyme catalyses 5'-deoxyadenosine + H2O = 5-deoxy-D-ribose + adenine. The protein operates within amino-acid biosynthesis; L-methionine biosynthesis via salvage pathway; S-methyl-5-thio-alpha-D-ribose 1-phosphate from S-methyl-5'-thioadenosine (hydrolase route): step 1/2. Catalyzes the irreversible cleavage of the glycosidic bond in both 5'-methylthioadenosine (MTA) and S-adenosylhomocysteine (SAH/AdoHcy) to adenine and the corresponding thioribose, 5'-methylthioribose and S-ribosylhomocysteine, respectively. Also cleaves 5'-deoxyadenosine, a toxic by-product of radical S-adenosylmethionine (SAM) enzymes, into 5-deoxyribose and adenine. Thus, is required for in vivo function of the radical SAM enzymes biotin synthase and lipoic acid synthase, that are inhibited by 5'-deoxyadenosine accumulation. This Sodalis glossinidius (strain morsitans) protein is 5'-methylthioadenosine/S-adenosylhomocysteine nucleosidase.